Consider the following 200-residue polypeptide: Late protein I196L (200 aa).

A run of 2 repeats spans residues serine 28–serine 48 and serine 49–serine 69. The stretch at serine 70–serine 91 is one 3; approximate repeat.

The protein belongs to the asfivirus I196L family.

This is Late protein I196L from African swine fever virus (isolate Tick/South Africa/Pretoriuskop Pr4/1996) (ASFV).